We begin with the raw amino-acid sequence, 178 residues long: Acireductone dioxygenase (178 aa).

His82, His84, Glu88, and His127 together coordinate Fe(2+). Residues His82, His84, Glu88, and His127 each contribute to the Ni(2+) site. Ser157 bears the Phosphoserine mark.

The protein belongs to the acireductone dioxygenase (ARD) family. Fe(2+) is required as a cofactor. Ni(2+) serves as cofactor.

Its subcellular location is the cytoplasm. It is found in the nucleus. It catalyses the reaction 1,2-dihydroxy-5-(methylsulfanyl)pent-1-en-3-one + O2 = 4-methylsulfanyl-2-oxobutanoate + formate + 2 H(+). The enzyme catalyses 1,2-dihydroxy-5-(methylsulfanyl)pent-1-en-3-one + O2 = 3-(methylsulfanyl)propanoate + CO + formate + 2 H(+). It functions in the pathway amino-acid biosynthesis; L-methionine biosynthesis via salvage pathway; L-methionine from S-methyl-5-thio-alpha-D-ribose 1-phosphate: step 5/6. Catalyzes 2 different reactions between oxygen and the acireductone 1,2-dihydroxy-3-keto-5-methylthiopentene (DHK-MTPene) depending upon the metal bound in the active site. Fe-containing acireductone dioxygenase (Fe-ARD) produces formate and 2-keto-4-methylthiobutyrate (KMTB), the alpha-ketoacid precursor of methionine in the methionine recycle pathway. Ni-containing acireductone dioxygenase (Ni-ARD) produces methylthiopropionate, carbon monoxide and formate, and does not lie on the methionine recycle pathway. The chain is Acireductone dioxygenase (adi1) from Schizosaccharomyces pombe (strain 972 / ATCC 24843) (Fission yeast).